The following is a 224-amino-acid chain: 7-cyano-7-deazaguanine synthase (224 aa).

8–18 contacts ATP; that stretch reads LSGGMDSAAVI. Positions 186, 196, 199, and 202 each coordinate Zn(2+).

Belongs to the QueC family. Requires Zn(2+) as cofactor.

The enzyme catalyses 7-carboxy-7-deazaguanine + NH4(+) + ATP = 7-cyano-7-deazaguanine + ADP + phosphate + H2O + H(+). Its pathway is purine metabolism; 7-cyano-7-deazaguanine biosynthesis. In terms of biological role, catalyzes the ATP-dependent conversion of 7-carboxy-7-deazaguanine (CDG) to 7-cyano-7-deazaguanine (preQ(0)). The protein is 7-cyano-7-deazaguanine synthase of Xanthomonas oryzae pv. oryzae (strain MAFF 311018).